Here is a 325-residue protein sequence, read N- to C-terminus: uncharacterized protein (325 aa).

The segment at 108-141 (PHRTQGISSTSSKSSKGGKKTPVRSTPKEIKKAT) is disordered.

This is an uncharacterized protein from Homo sapiens (Human).